A 567-amino-acid polypeptide reads, in one-letter code: Proline--tRNA ligase (567 aa).

This sequence belongs to the class-II aminoacyl-tRNA synthetase family. ProS type 1 subfamily. As to quaternary structure, homodimer.

It is found in the cytoplasm. The enzyme catalyses tRNA(Pro) + L-proline + ATP = L-prolyl-tRNA(Pro) + AMP + diphosphate. Functionally, catalyzes the attachment of proline to tRNA(Pro) in a two-step reaction: proline is first activated by ATP to form Pro-AMP and then transferred to the acceptor end of tRNA(Pro). As ProRS can inadvertently accommodate and process non-cognate amino acids such as alanine and cysteine, to avoid such errors it has two additional distinct editing activities against alanine. One activity is designated as 'pretransfer' editing and involves the tRNA(Pro)-independent hydrolysis of activated Ala-AMP. The other activity is designated 'posttransfer' editing and involves deacylation of mischarged Ala-tRNA(Pro). The misacylated Cys-tRNA(Pro) is not edited by ProRS. The protein is Proline--tRNA ligase of Stenotrophomonas maltophilia (strain K279a).